Consider the following 547-residue polypeptide: Chaperonin GroEL (547 aa).

ATP is bound by residues 30-33, K51, 87-91, G415, 479-481, and D495; these read TLGP, DGTTT, and NAA.

It belongs to the chaperonin (HSP60) family. As to quaternary structure, forms a cylinder of 14 subunits composed of two heptameric rings stacked back-to-back. Interacts with the co-chaperonin GroES.

Its subcellular location is the cytoplasm. The catalysed reaction is ATP + H2O + a folded polypeptide = ADP + phosphate + an unfolded polypeptide.. Together with its co-chaperonin GroES, plays an essential role in assisting protein folding. The GroEL-GroES system forms a nano-cage that allows encapsulation of the non-native substrate proteins and provides a physical environment optimized to promote and accelerate protein folding. The chain is Chaperonin GroEL from Acinetobacter baumannii (strain ACICU).